Reading from the N-terminus, the 192-residue chain is Xanthine phosphoribosyltransferase 2 (192 aa).

2 residues coordinate xanthine: L20 and N27. 131–135 (ANACA) provides a ligand contact to 5-phospho-alpha-D-ribose 1-diphosphate. Residue K159 coordinates xanthine.

It belongs to the purine/pyrimidine phosphoribosyltransferase family. Xpt subfamily. As to quaternary structure, homodimer.

The protein resides in the cytoplasm. It carries out the reaction XMP + diphosphate = xanthine + 5-phospho-alpha-D-ribose 1-diphosphate. It participates in purine metabolism; XMP biosynthesis via salvage pathway; XMP from xanthine: step 1/1. Its function is as follows. Converts the preformed base xanthine, a product of nucleic acid breakdown, to xanthosine 5'-monophosphate (XMP), so it can be reused for RNA or DNA synthesis. The polypeptide is Xanthine phosphoribosyltransferase 2 (Clostridium perfringens (strain ATCC 13124 / DSM 756 / JCM 1290 / NCIMB 6125 / NCTC 8237 / Type A)).